Reading from the N-terminus, the 300-residue chain is MSYRELVVELAREHAEALSDALLELGALSVSVEDADADTPDEQPLFGEPGLTPERTAWTHSRVIALLAPEHEPAVLLAAAANELGLADTPSFSVRAVEEQDWVRLTQSQFDPIPIGERIWVVPSWHDAPDPDALVLELDPGLAFGTGSHPTTRLCMEWLEQSVQKDQSVLDYGCGSGILAILAKKCGANPVFGIDIDPQAVESARHNSERNRAEITYGLPADCPAGEFDIVVANILSNPLKLMASMLSSKVKPGGRIALSGILARQAEEVASVYRQWIDIAVWREHEGWVCLAGTRRESN.

The S-adenosyl-L-methionine site is built by Thr152, Gly173, Asp195, and Asn234.

This sequence belongs to the methyltransferase superfamily. PrmA family.

It is found in the cytoplasm. The catalysed reaction is L-lysyl-[protein] + 3 S-adenosyl-L-methionine = N(6),N(6),N(6)-trimethyl-L-lysyl-[protein] + 3 S-adenosyl-L-homocysteine + 3 H(+). Functionally, methylates ribosomal protein L11. The chain is Ribosomal protein L11 methyltransferase from Paraburkholderia phymatum (strain DSM 17167 / CIP 108236 / LMG 21445 / STM815) (Burkholderia phymatum).